A 152-amino-acid polypeptide reads, in one-letter code: Xanthine-guanine phosphoribosyltransferase (152 aa).

Residues 37–38 (RG), Arg69, and 88–96 (DDLVDTGGT) contribute to the 5-phospho-alpha-D-ribose 1-diphosphate site. Arg69 is a GMP binding site. Asp89 is a Mg(2+) binding site. 2 residues coordinate guanine: Asp92 and Ile135. Residues Asp92 and Ile135 each contribute to the xanthine site. GMP is bound by residues 92-96 (DTGGT) and 134-135 (WI).

Belongs to the purine/pyrimidine phosphoribosyltransferase family. XGPT subfamily. Homotetramer. Mg(2+) is required as a cofactor.

Its subcellular location is the cell inner membrane. It carries out the reaction GMP + diphosphate = guanine + 5-phospho-alpha-D-ribose 1-diphosphate. The enzyme catalyses XMP + diphosphate = xanthine + 5-phospho-alpha-D-ribose 1-diphosphate. It catalyses the reaction IMP + diphosphate = hypoxanthine + 5-phospho-alpha-D-ribose 1-diphosphate. It participates in purine metabolism; GMP biosynthesis via salvage pathway; GMP from guanine: step 1/1. It functions in the pathway purine metabolism; XMP biosynthesis via salvage pathway; XMP from xanthine: step 1/1. In terms of biological role, purine salvage pathway enzyme that catalyzes the transfer of the ribosyl-5-phosphate group from 5-phospho-alpha-D-ribose 1-diphosphate (PRPP) to the N9 position of the 6-oxopurines guanine and xanthine to form the corresponding ribonucleotides GMP (guanosine 5'-monophosphate) and XMP (xanthosine 5'-monophosphate), with the release of PPi. To a lesser extent, also acts on hypoxanthine. In Escherichia coli O127:H6 (strain E2348/69 / EPEC), this protein is Xanthine-guanine phosphoribosyltransferase.